The following is a 319-amino-acid chain: ADP-L-glycero-D-manno-heptose-6-epimerase (319 aa).

Residues 10 to 11 (FI), 31 to 32 (DD), Lys-38, Lys-53, and 79 to 83 (EGACS) contribute to the NADP(+) site. Tyr-144 functions as the Proton acceptor in the catalytic mechanism. Lys-148 lines the NADP(+) pocket. A substrate-binding site is contributed by Asn-173. NADP(+) is bound by residues Val-174 and Lys-182. Lys-182 serves as the catalytic Proton acceptor. Substrate-binding positions include Ser-184, His-191, 205 to 208 (FEGC), Arg-218, and Tyr-282.

The protein belongs to the NAD(P)-dependent epimerase/dehydratase family. HldD subfamily. As to quaternary structure, homopentamer. NADP(+) is required as a cofactor.

The enzyme catalyses ADP-D-glycero-beta-D-manno-heptose = ADP-L-glycero-beta-D-manno-heptose. It functions in the pathway nucleotide-sugar biosynthesis; ADP-L-glycero-beta-D-manno-heptose biosynthesis; ADP-L-glycero-beta-D-manno-heptose from D-glycero-beta-D-manno-heptose 7-phosphate: step 4/4. In terms of biological role, catalyzes the interconversion between ADP-D-glycero-beta-D-manno-heptose and ADP-L-glycero-beta-D-manno-heptose via an epimerization at carbon 6 of the heptose. In Aeromonas salmonicida (strain A449), this protein is ADP-L-glycero-D-manno-heptose-6-epimerase.